Reading from the N-terminus, the 543-residue chain is Cyclohexanone 1,2-monooxygenase (543 aa).

Residues phenylalanine 16, aspartate 37, tryptophan 46, aspartate 57, tyrosine 63, and valine 110 each contribute to the FAD site.

The protein belongs to the FAD-binding monooxygenase family. Requires FAD as cofactor.

It catalyses the reaction cyclohexanone + NADPH + O2 + H(+) = hexano-6-lactone + NADP(+) + H2O. This Acinetobacter sp protein is Cyclohexanone 1,2-monooxygenase.